Consider the following 390-residue polypeptide: O-glycoside alpha-1,2-mannosyltransferase omh1 (390 aa).

E279 acts as the Nucleophile in catalysis.

This sequence belongs to the glycosyltransferase 15 family.

The protein localises to the endoplasmic reticulum. It is found in the golgi apparatus. Functionally, mannosyltransferase involved in O-glycosylation of cell wall and secreted proteins. Plays a major role in extending alpha-1,2-linked mannose in the O-glycan pathway. This Schizosaccharomyces pombe (strain 972 / ATCC 24843) (Fission yeast) protein is O-glycoside alpha-1,2-mannosyltransferase omh1 (omh1).